Reading from the N-terminus, the 298-residue chain is Sulfofructose kinase (298 aa).

Positions 13, 27, 39, 95, and 138 each coordinate 6-deoxy-6-sulfo-D-fructose. Positions 212, 214, 217, and 243 each coordinate ATP. Residue Asp244 participates in 6-deoxy-6-sulfo-D-fructose binding.

It belongs to the carbohydrate kinase PfkB family. As to quaternary structure, homodimer.

It catalyses the reaction 6-deoxy-6-sulfo-D-fructose + ATP = 6-deoxy-6-sulfo-D-fructose 1-phosphate + ADP + H(+). Strongly inhibited by ADP. Activated by sulfoquinovose (SQ), sulfolactaldehyde (SLA) and dihydroxyacetone phosphate (DHAP) (through effects on KM) and by fructose 6-phosphate (F6P), fructose bisphosphate (FBP), phosphoenolpyruvate (PEP) and citrate (through effects on kcat/KM). Functionally, phosphorylates 6-deoxy-6-sulfo-D-fructose (SF) to 6-deoxy-6-sulfo-D-fructose 1-phosphate (SFP). Cannot phosphorylate fructose 6-phosphate. The polypeptide is Sulfofructose kinase (yihV) (Escherichia coli (strain K12)).